The sequence spans 125 residues: Somatostatin-2 (125 aa).

The signal sequence occupies residues 1–24 (MQCIRCPAILALLALVLCGPSVSS). The residue at position 25 (glutamine 25) is a Pyrrolidone carboxylic acid. The propeptide occupies 25–97 (QLDREQSDNQ…ATGGRMNLER (73 aa)). A disordered region spans residues 82–107 (AEDASMATGGRMNLERSVDSTNNLPP). Residues cysteine 114 and cysteine 125 are joined by a disulfide bond. The residue at position 120 (lysine 120) is a 5-hydroxylysine.

This sequence belongs to the somatostatin family.

It is found in the secreted. Somatostatin inhibits the release of somatotropin. This Lophius americanus (American angler) protein is Somatostatin-2 (sst2).